The following is a 410-amino-acid chain: MAKDAGLIEANGELKVFIDQNLSPGKGVVSLVAVHPSTVNPLGKQLLPKTFGQSNVNIAQQVVIGTPQRPAASNTLVVGSPHTPSTHFASQNQPSDSSPWSAGKRNRKGEKNGKGLRHFSMKVCEKVQRKGTTSYNEVADELVAEFSAADNHILPNESAYDQKNIRRRVYDALNVLMAMNIISKEKKEIKWIGLPTNSAQECQNLEVERQRRLERIKQKQSQLQELILQQIAFKNLVQRNRHAEQQASRPPPPNSVIHLPFIIVNTSKKTVIDCSISNDKFEYLFNFDNTFEIHDDIEVLKRMGMACGLESGSCSAEDLKMARSLVPKALEPYVTEMAQGTVGGVFITTAGSTSNGTRFSASDLTNGADGMLATSSNGSQYSGSRVETPVSYVGEDDEEDDDFNENDEDD.

Residue Lys3 is modified to N6-acetyllysine. A Phosphoserine modification is found at Ser23. Residues 73 to 100 (SNTLVVGSPHTPSTHFASQNQPSDSSPW) are compositionally biased toward polar residues. A disordered region spans residues 73–116 (SNTLVVGSPHTPSTHFASQNQPSDSSPWSAGKRNRKGEKNGKGL). Residues 104–116 (KRNRKGEKNGKGL) are compositionally biased toward basic residues. Positions 105–127 (RNRKGEKNGKGLRHFSMKVCEKV) are interaction with CEBPA. Residues 113 to 195 (GKGLRHFSMK…KKEIKWIGLP (83 aa)) mediate DNA binding. The DEF box motif lies at 161–195 (DQKNIRRRVYDALNVLMAMNIISKEKKEIKWIGLP). The segment at 204–277 (NLEVERQRRL…KKTVIDCSIS (74 aa)) is dimerization. The tract at residues 211–327 (RRLERIKQKQ…DLKMARSLVP (117 aa)) is enhances binding of RB protein to E2F. The tract at residues 214 to 246 (ERIKQKQSQLQELILQQIAFKNLVQRNRHAEQQ) is DCB1. The segment at 259-315 (LPFIIVNTSKKTVIDCSISNDKFEYLFNFDNTFEIHDDIEVLKRMGMACGLESGSCS) is DCB2. The tract at residues 370-410 (GMLATSSNGSQYSGSRVETPVSYVGEDDEEDDDFNENDEDD) is disordered. Over residues 373 to 385 (ATSSNGSQYSGSR) the composition is skewed to polar residues. Acidic residues predominate over residues 394 to 410 (GEDDEEDDDFNENDEDD).

Belongs to the E2F/DP family. As to quaternary structure, component of the E2F:DP transcription factor complex. Forms heterodimers with E2F family members. The complex can interact with hypophosphorylated retinoblastoma protein RB1 and related proteins (RBL1 and RBL2) that inhibit the E2F transactivation domain. This repression involves recruitment of histone deacetylase (HDAC). During the cell cycle, from mid-to-late G1 phase, RB family members become phosphorylated, detach from the DRTF1/E2F complex to render E2F transcriptionally active. Viral oncoproteins, notably E1A, T-antigen and HPV E7, are capable of sequestering RB protein, thus releasing the active complex. Part of the E2F6.com-1 complex in G0 phase is composed of E2F6, MGA, MAX, TFDP1, CBX3, BAT8, EUHMTASE1, RING1, RNF2, MBLR, L3MBTL2 YAF2. Component of the DREAM complex (also named LINC complex) at least composed of E2F4, E2F5, LIN9, LIN37, LIN52, LIN54, MYBL1, MYBL2, RBL1, RBL2, RBBP4, TFDP1 and TFDP2. The complex exists in quiescent cells where it represses cell cycle-dependent genes. It dissociates in S phase when LIN9, LIN37, LIN52 and LIN54 form a subcomplex that binds to MYBL2. The complex TFDP1:E2F1 interacts with CEBPA; the interaction prevents CEBPA binding to target gene promoters and represses its transcriptional activity. Phosphorylation by E2F1-bound cyclin A-CDK2, in the S phase, inhibits E2F-mediated DNA binding and transactivation. Post-translationally, ubiquitinated by the BCR(KBTBD5) complex, leading to its subsequent degradation. Highest levels in muscle. Also expressed in brain, placenta, liver and kidney. Lower levels in lung and pancreas. Not detected in heart.

It localises to the nucleus. The protein resides in the cytoplasm. Can stimulate E2F-dependent transcription. Binds DNA cooperatively with E2F family members through the E2 recognition site, 5'-TTTC[CG]CGC-3', found in the promoter region of a number of genes whose products are involved in cell cycle regulation or in DNA replication. The E2F1:DP complex appears to mediate both cell proliferation and apoptosis. Blocks adipocyte differentiation by repressing CEBPA binding to its target gene promoters. The protein is Transcription factor Dp-1 (TFDP1) of Homo sapiens (Human).